We begin with the raw amino-acid sequence, 226 residues long: Thymidylate kinase (226 aa).

20–27 (GGEGAGKS) provides a ligand contact to ATP.

The protein belongs to the thymidylate kinase family.

The enzyme catalyses dTMP + ATP = dTDP + ADP. Its function is as follows. Phosphorylation of dTMP to form dTDP in both de novo and salvage pathways of dTTP synthesis. The chain is Thymidylate kinase from Bradyrhizobium sp. (strain BTAi1 / ATCC BAA-1182).